Here is a 257-residue protein sequence, read N- to C-terminus: 1-(5-phosphoribosyl)-5-[(5-phosphoribosylamino)methylideneamino] imidazole-4-carboxamide isomerase (257 aa).

The active-site Proton acceptor is Asp8. Catalysis depends on Asp129, which acts as the Proton donor.

This sequence belongs to the HisA/HisF family.

Its subcellular location is the cytoplasm. It catalyses the reaction 1-(5-phospho-beta-D-ribosyl)-5-[(5-phospho-beta-D-ribosylamino)methylideneamino]imidazole-4-carboxamide = 5-[(5-phospho-1-deoxy-D-ribulos-1-ylimino)methylamino]-1-(5-phospho-beta-D-ribosyl)imidazole-4-carboxamide. The protein operates within amino-acid biosynthesis; L-histidine biosynthesis; L-histidine from 5-phospho-alpha-D-ribose 1-diphosphate: step 4/9. This chain is 1-(5-phosphoribosyl)-5-[(5-phosphoribosylamino)methylideneamino] imidazole-4-carboxamide isomerase, found in Cyanothece sp. (strain PCC 7425 / ATCC 29141).